An 860-amino-acid polypeptide reads, in one-letter code: Nuclear cap-binding protein complex subunit 1 (860 aa).

Residues 36-271 form the MIF4G domain; that stretch reads CKDMLPDIRT…SNVKNALAND (236 aa).

The protein belongs to the NCBP1 family. As to quaternary structure, component of the nuclear cap-binding complex (CBC).

It localises to the nucleus. Component of the cap-binding complex (CBC) involved in the nuclear export of capped U snRNAs. The CBC complex is required for efficient pre-mRNA splicing through efficient commitment complex and spliceosome formation; and involved in rRNA processing at sites A0, A1 and A2. The polypeptide is Nuclear cap-binding protein complex subunit 1 (CBC1) (Eremothecium gossypii (strain ATCC 10895 / CBS 109.51 / FGSC 9923 / NRRL Y-1056) (Yeast)).